The primary structure comprises 139 residues: Actin-depolymerizing factor 1 (139 aa).

The region spanning 5–139 is the ADF-H domain; that stretch reads ASGMAVCDEC…SMDIVKSRAL (135 aa).

This sequence belongs to the actin-binding proteins ADF family.

Functionally, actin-depolymerizing protein. Severs actin filaments (F-actin) and binds to actin monomers. The sequence is that of Actin-depolymerizing factor 1 (ADF1) from Oryza sativa subsp. japonica (Rice).